A 351-amino-acid chain; its full sequence is Dysbindin (351 aa).

Residue serine 11 is modified to Phosphoserine. The stretch at 88 to 181 forms a coiled coil; sequence EKKKTSLVEL…ELDAEHAQKV (94 aa). The interval 173-331 is dysbindin; that stretch reads LDAEHAQKVL…DEEEVQVDTA (159 aa). The Nuclear export signal motif lies at 243-256; it reads LMDISDQEALDVFL. Positions 286–351 are disordered; the sequence is PNPSELRAKP…TPDGGEDSDS (66 aa). Residues 296-305 are compositionally biased toward polar residues; sequence PSSSSTCTDS. Phosphoserine occurs at positions 316, 321, and 349.

Belongs to the dysbindin family. Interacts (via its coiled coil domain) with KXD1. Interacts with CMYA5, PI4K2 and RNF151. Component of the biogenesis of lysosome-related organelles complex 1 (BLOC-1) composed of at least BLOC1S1, BLOC1S2, BLOC1S3, BLOC1S4, BLOC1S5, BLOC1S6, DTNBP1/BLOC1S7 and SNAPIN/BLOC1S8. Interacts directly in the complex with BLOC1S5, BLOC1S6 and SNAPIN/BLOC1S8. The BLOC-1 complex associates with the AP-3 protein complex and membrane protein cargos. This BLOC-1 complex also associates with the BLOC-2 complex in endosomes. Binds to DTNA and DTNB but may not be a physiological binding partner. Interacts (isoform 1 and isoform 2 only) with the DNA-dependent protein kinase complex DNA-PK; the interaction phosphorylates DTNBP1 in vitro. Interacts directly in this complex with XRCC5 and XRCC6. Interacts with AP3M1, AP3B2 and TRIM32. Interacts with XPO1; the interaction exports DTNBP1 out of the nucleus. Post-translationally, ubiquitinated by TRIM32. Ubiquitination leads to DTNBP1 degradation. Isoforms 1 and 2 highly phosphorylated by PRKDC in vitro. Isoform 3 only weakly phosphorylated by PRKDC in vitro. Detected in brain, in neurons and in neuropil. Isoform 1 is expressed in the cerebral cortex, and hippocampal frontal (HF). Specific expression in the posterior half of the superior temporal gyrus (pSTG). Higher expression of isoform 2 and 3 in the HF than in the pSTG while isoform 1 shows no difference in expression in these areas. In the HF, detected in dentate gyrus (DG) and in pyramidal cells of hippocampus CA2 and CA3 (at protein level). Expressed in all principal neuronal populations of the HF, namely pyramidal neurons in the subiculum and CA1-3, granule cells in the dense cell layer of the DG (DGg), and polymorph cells in the hilus of the DG (DGh). Maximal levels in CA2, CA3, and DGh. Isoform 2 not expressed in the cerebral cortex.

Its subcellular location is the cytoplasm. It is found in the cytoplasmic vesicle membrane. It localises to the endosome membrane. The protein resides in the melanosome membrane. The protein localises to the postsynaptic density. Its subcellular location is the endoplasmic reticulum. It is found in the nucleus. It localises to the cytoplasmic vesicle. The protein resides in the secretory vesicle. The protein localises to the synaptic vesicle membrane. Its subcellular location is the postsynaptic cell membrane. In terms of biological role, component of the BLOC-1 complex, a complex that is required for normal biogenesis of lysosome-related organelles (LRO), such as platelet dense granules and melanosomes. In concert with the AP-3 complex, the BLOC-1 complex is required to target membrane protein cargos into vesicles assembled at cell bodies for delivery into neurites and nerve terminals. The BLOC-1 complex, in association with SNARE proteins, is also proposed to be involved in neurite extension. Associates with the BLOC-2 complex to facilitate the transport of TYRP1 independent of AP-3 function. Plays a role in synaptic vesicle trafficking and in neurotransmitter release. Plays a role in the regulation of cell surface exposure of DRD2. May play a role in actin cytoskeleton reorganization and neurite outgrowth. May modulate MAPK8 phosphorylation. Appears to promote neuronal transmission and viability through regulating the expression of SNAP25 and SYN1, modulating PI3-kinase-Akt signaling and influencing glutamatergic release. Regulates the expression of SYN1 through binding to its promoter. Modulates prefrontal cortical activity via the dopamine/D2 pathway. The chain is Dysbindin (DTNBP1) from Homo sapiens (Human).